The primary structure comprises 487 residues: Probable glutamate receptor (487 aa).

The signal sequence occupies residues 1 to 23 (MDKGQHFVFFVLTTVLLLRESSH). The Extracellular segment spans residues 24-169 (AGAMRNDAAA…FFHFLAPFSK (146 aa)). The N-linked (GlcNAc...) asparagine glycan is linked to N104. A helical membrane pass occupies residues 170-190 (ETWTGLLFAYILTCFCLFLVA). At 191 to 235 (RLSPCEWNEPKNEENHFTFLNSLWFGAGALALQGVTPRPKALSVR) the chain is on the cytoplasmic side. Residues 236–256 (VIAAIWWLFTIALLAAYIANF) traverse the membrane as a helical segment. Topologically, residues 257–419 (TALLSSGSEQ…ERWSPLQPQA (163 aa)) are extracellular. A helical membrane pass occupies residues 420–440 (LGGLFLTLAIGLALGVIAAVV). Residues 441 to 487 (ELSNKSRHAAGHVKKSCCSIFTEEMCTRLRIKENTRQSQETSGRANA) are Cytoplasmic-facing.

It belongs to the glutamate-gated ion channel (TC 1.A.10.1) family.

The protein resides in the cell membrane. The protein localises to the postsynaptic cell membrane. Its function is as follows. Receptor for glutamate. L-glutamate acts as an excitatory neurotransmitter at many synapses in the central nervous system. The postsynaptic actions of Glu are mediated by a variety of receptors that are named according to their selective agonists. The chain is Probable glutamate receptor (KBP) from Anas platyrhynchos (Mallard).